Here is a 722-residue protein sequence, read N- to C-terminus: MTSISKKKQPETVDDLDFGRMVGELIDHRKIIIALTSFATLIALLYAFFATPIYKADALIQVEQKQANAILSNLSQMLPDSQPQSAPEIALIQSRMILGKTVDDLNLQAVVSPKYFPIFGRGWARLSGEHQGNIQLSRLYVSSSIGDEENPPEFTLKVKDSNRYVIEFGGEEINGKVGELIEKDGITLKIDEINAKPGAEFTIKYVSKLKAIADLQENLSVADQGKDTGILILSYLGDDPLKIKNIVDSISENYLAQNISRQAAQDEKSLEFLNKQLPMVRSDLDSAEDKLNDFRKRNDSVDLSLEAKSVLDQIVNVDNQLNELTFRESEISQLYTKEHPTYKALMEKRKTLQDERGKLNKRVATMPETQQEILRLSRDVESGRAVYMQLLNRQQELNIAKSSAIGNVRIIDSAVTQHKPVKPKKIIVVLAGLFIGLVISVSLVLVRILLRKGIETPEQLEELGINVYASIPVSESNPKNVIAKRLNKRDDSRPKVLLATENPADLAIEAIRGLRTSLHFAMLEARNNLLMISGASPNAGKTFVSSNLSSVISQTGKKVIFIDADLRKGYTHKLFNIKNTNGLSDYLSGRVALDKIINNLQTEGFDYISRGSVPPNPAELLMHNRLAELLEWANKSYDIVILDTPPILAVADAAIIGNYVGTTLLVARFEENTPKEIDISVKRFQNSGVNIKGCILNGVVKKATNKYGYGYNYYDYSYSDKK.

2 consecutive transmembrane segments (helical) span residues 31 to 53 (IIIA…ATPI) and 427 to 449 (IVVL…VRIL).

The protein belongs to the etk/wzc family. In terms of processing, autophosphorylated on tyrosine residue(s).

It localises to the cell inner membrane. The catalysed reaction is L-tyrosyl-[protein] + ATP = O-phospho-L-tyrosyl-[protein] + ADP + H(+). It participates in glycan metabolism; exopolysaccharide biosynthesis. In Klebsiella pneumoniae, this protein is Putative tyrosine-protein kinase in cps region.